The primary structure comprises 666 residues: UvrABC system protein B (666 aa).

The Helicase ATP-binding domain maps to 26–414; sequence DSFQKGEKKV…KVVEQIIRPT (389 aa). An ATP-binding site is contributed by 39 to 46; it reads GVTGSGKT. Positions 92 to 115 match the Beta-hairpin motif; that stretch reads YYDYYQPEAYVPSSDTFIEKDSSI. The Helicase C-terminal domain maps to 429–591; it reads QIEDLLVEIR…ITPLTIKKEV (163 aa). Residues 625-660 form the UVR domain; that stretch reads EVLKEKLREEMMKAAKELDFERAAILRDKMLSIQTE.

This sequence belongs to the UvrB family. As to quaternary structure, forms a heterotetramer with UvrA during the search for lesions. Interacts with UvrC in an incision complex.

The protein localises to the cytoplasm. Its function is as follows. The UvrABC repair system catalyzes the recognition and processing of DNA lesions. A damage recognition complex composed of 2 UvrA and 2 UvrB subunits scans DNA for abnormalities. Upon binding of the UvrA(2)B(2) complex to a putative damaged site, the DNA wraps around one UvrB monomer. DNA wrap is dependent on ATP binding by UvrB and probably causes local melting of the DNA helix, facilitating insertion of UvrB beta-hairpin between the DNA strands. Then UvrB probes one DNA strand for the presence of a lesion. If a lesion is found the UvrA subunits dissociate and the UvrB-DNA preincision complex is formed. This complex is subsequently bound by UvrC and the second UvrB is released. If no lesion is found, the DNA wraps around the other UvrB subunit that will check the other stand for damage. The chain is UvrABC system protein B from Leptospira interrogans serogroup Icterohaemorrhagiae serovar copenhageni (strain Fiocruz L1-130).